Reading from the N-terminus, the 175-residue chain is 3-hydroxyanthranilate 3,4-dioxygenase (175 aa).

Position 45 (Arg45) interacts with O2. The Fe cation site is built by His49, Glu55, and His93. Glu55 lines the substrate pocket. Residues Arg97 and Glu107 each coordinate substrate. Cys122, Cys125, Cys159, and Cys162 together coordinate a divalent metal cation.

It belongs to the 3-HAO family. Requires Fe(2+) as cofactor.

It is found in the cytoplasm. The enzyme catalyses 3-hydroxyanthranilate + O2 = (2Z,4Z)-2-amino-3-carboxymuconate 6-semialdehyde. The protein operates within cofactor biosynthesis; NAD(+) biosynthesis; quinolinate from L-kynurenine: step 3/3. Functionally, catalyzes the oxidative ring opening of 3-hydroxyanthranilate to 2-amino-3-carboxymuconate semialdehyde, which spontaneously cyclizes to quinolinate. This chain is 3-hydroxyanthranilate 3,4-dioxygenase, found in Lodderomyces elongisporus (strain ATCC 11503 / CBS 2605 / JCM 1781 / NBRC 1676 / NRRL YB-4239) (Yeast).